We begin with the raw amino-acid sequence, 183 residues long: ATP synthase subunit delta (183 aa).

Belongs to the ATPase delta chain family. F-type ATPases have 2 components, F(1) - the catalytic core - and F(0) - the membrane proton channel. F(1) has five subunits: alpha(3), beta(3), gamma(1), delta(1), epsilon(1). F(0) has three main subunits: a(1), b(2) and c(10-14). The alpha and beta chains form an alternating ring which encloses part of the gamma chain. F(1) is attached to F(0) by a central stalk formed by the gamma and epsilon chains, while a peripheral stalk is formed by the delta and b chains.

The protein localises to the cell inner membrane. Functionally, f(1)F(0) ATP synthase produces ATP from ADP in the presence of a proton or sodium gradient. F-type ATPases consist of two structural domains, F(1) containing the extramembraneous catalytic core and F(0) containing the membrane proton channel, linked together by a central stalk and a peripheral stalk. During catalysis, ATP synthesis in the catalytic domain of F(1) is coupled via a rotary mechanism of the central stalk subunits to proton translocation. In terms of biological role, this protein is part of the stalk that links CF(0) to CF(1). It either transmits conformational changes from CF(0) to CF(1) or is implicated in proton conduction. This is ATP synthase subunit delta from Oleidesulfovibrio alaskensis (strain ATCC BAA-1058 / DSM 17464 / G20) (Desulfovibrio alaskensis).